The following is a 240-amino-acid chain: Mediator of RNA polymerase II transcription subunit 19-B (240 aa).

Residues 1–14 (MTEIFSSLYGQPDS) are compositionally biased toward polar residues. Disordered stretches follow at residues 1 to 29 (MTEIFSSLYGQPDSQGPAGPSALGFGSGK) and 168 to 240 (PKKK…SSLR). Basic residues-rich tracts occupy residues 168 to 180 (PKKKNKHKHKHHR) and 209 to 221 (KKKKKDKKKKKNR).

This sequence belongs to the Mediator complex subunit 19 family. In terms of assembly, component of the Mediator complex.

It is found in the nucleus. In terms of biological role, component of the Mediator complex, a coactivator involved in the regulated transcription of nearly all RNA polymerase II-dependent genes. Mediator functions as a bridge to convey information from gene-specific regulatory proteins to the basal RNA polymerase II transcription machinery. Mediator is recruited to promoters by direct interactions with regulatory proteins and serves as a scaffold for the assembly of a functional preinitiation complex with RNA polymerase II and the general transcription factors. In Danio rerio (Zebrafish), this protein is Mediator of RNA polymerase II transcription subunit 19-B (med19b).